A 1393-amino-acid chain; its full sequence is DNA-directed RNA polymerase subunit beta' (1393 aa).

Residues C71, C73, C86, and C89 each contribute to the Zn(2+) site. 3 residues coordinate Mg(2+): D462, D464, and D466. Zn(2+) is bound by residues C811, C885, C892, and C895.

Belongs to the RNA polymerase beta' chain family. As to quaternary structure, the RNAP catalytic core consists of 2 alpha, 1 beta, 1 beta' and 1 omega subunit. When a sigma factor is associated with the core the holoenzyme is formed, which can initiate transcription. Mg(2+) serves as cofactor. Zn(2+) is required as a cofactor.

The enzyme catalyses RNA(n) + a ribonucleoside 5'-triphosphate = RNA(n+1) + diphosphate. Its function is as follows. DNA-dependent RNA polymerase catalyzes the transcription of DNA into RNA using the four ribonucleoside triphosphates as substrates. In Azorhizobium caulinodans (strain ATCC 43989 / DSM 5975 / JCM 20966 / LMG 6465 / NBRC 14845 / NCIMB 13405 / ORS 571), this protein is DNA-directed RNA polymerase subunit beta'.